The sequence spans 328 residues: Cytochrome f (328 aa).

The signal sequence occupies residues 1 to 44 (MRTFNFLSFPQVHRQALVKAVLVAIATVSLLLTSDVINPQSAQA). Heme-binding residues include Y45, C66, C69, and H70. The helical transmembrane segment at 294 to 314 (IKGLVLFLGGIMLCQILLVIK) threads the bilayer.

This sequence belongs to the cytochrome f family. In terms of assembly, the 4 large subunits of the cytochrome b6-f complex are cytochrome b6, subunit IV (17 kDa polypeptide, PetD), cytochrome f and the Rieske protein, while the 4 small subunits are PetG, PetL, PetM and PetN. The complex functions as a dimer. Requires heme as cofactor.

Its subcellular location is the cellular thylakoid membrane. Functionally, component of the cytochrome b6-f complex, which mediates electron transfer between photosystem II (PSII) and photosystem I (PSI), cyclic electron flow around PSI, and state transitions. This is Cytochrome f from Microcystis aeruginosa (strain NIES-843 / IAM M-2473).